Consider the following 213-residue polypeptide: General transcription factor 3C polypeptide 6 (213 aa).

The span at 1–11 (MAAAADERSPE) shows a compositional bias: basic and acidic residues. Disordered stretches follow at residues 1–20 (MAAAADERSPEDGEDEEEEE) and 191–213 (SGPLIDIPSETEGSVFMETQMLP). Position 2 is an N-acetylalanine (alanine 2). At serine 9 the chain carries Phosphoserine.

The protein belongs to the TFIIIC subunit 6 family. Part of the TFIIIC subcomplex TFIIIC2, consisting of six subunits, GTF3C1, GTF3C2, GTF3C3, GTF3C4, GTF3C5 and GTF3C6. Interacts with GTF3C4 and GTF3C5.

Its subcellular location is the nucleus. Functionally, involved in RNA polymerase III-mediated transcription. Integral, tightly associated component of the DNA-binding TFIIIC2 subcomplex that directly binds tRNA and virus-associated RNA promoters. This chain is General transcription factor 3C polypeptide 6 (GTF3C6), found in Homo sapiens (Human).